The primary structure comprises 132 residues: Small ribosomal subunit protein uS8 (132 aa).

This sequence belongs to the universal ribosomal protein uS8 family. In terms of assembly, part of the 30S ribosomal subunit. Contacts proteins S5 and S12.

Its function is as follows. One of the primary rRNA binding proteins, it binds directly to 16S rRNA central domain where it helps coordinate assembly of the platform of the 30S subunit. The sequence is that of Small ribosomal subunit protein uS8 from Bradyrhizobium sp. (strain BTAi1 / ATCC BAA-1182).